Here is a 355-residue protein sequence, read N- to C-terminus: MCFGGRGKDDEAEASRSRELDKQIRADEKRLSKEVKLLLLGAGESGKSTILKQMKLIYAQGFSKNEKLEWRPVIFANILQSFRLIFDAMNEFNIKLEDEDNEKNMVQMMVDYEMRGDEPLPLEYFEPAKKLWQDSGVRQAIEKGNEFALHDNLQYFCSDLDRLWDRNYVPSDQDLLRSRLRTTGITETVFDLGQLTYRMFDVGGQRSERKKWIHCFENVNCLLFLVAISGYDQCLVEDKDGNQMNEALMLWESIANSHWFTKSALILFLNKIDLFKEKLPRSPITNHGFTDYHGPPDDSKQASKYFMDKFRALNRNPDKEIYGHFTNATDTNLLKITMGSVQDMIIQRNLKQLIL.

The disordered stretch occupies residues 1–20 (MCFGGRGKDDEAEASRSREL). One can recognise a G-alpha domain in the interval 33-355 (KEVKLLLLGA…IQRNLKQLIL (323 aa)). The tract at residues 36 to 49 (KLLLLGAGESGKST) is G1 motif. Positions 44, 45, 46, 47, 48, 49, 151, 176, 182, 204, 270, 271, 273, and 328 each coordinate GTP. Ser48 serves as a coordination point for Mg(2+). Residues 174 to 182 (DLLRSRLRT) form a G2 motif region. Thr182 lines the Mg(2+) pocket. Residues 197–206 (YRMFDVGGQR) form a G3 motif region. Positions 266–273 (ILFLNKID) are G4 motif. Positions 326-331 (TNATDT) are G5 motif.

This sequence belongs to the G-alpha family. G(q) subfamily. In terms of assembly, g proteins are composed of 3 units; alpha, beta and gamma. The alpha chain contains the guanine nucleotide binding site. Mg(2+) is required as a cofactor.

Its function is as follows. Guanine nucleotide-binding proteins (G proteins) are involved as modulators or transducers in various transmembrane signaling systems. This chain is Guanine nucleotide-binding protein alpha-2 subunit (gna-2), found in Neurospora crassa (strain ATCC 24698 / 74-OR23-1A / CBS 708.71 / DSM 1257 / FGSC 987).